Reading from the N-terminus, the 444-residue chain is RING finger and transmembrane domain-containing protein 2 (444 aa).

At 1 to 181 the chain is on the extracellular side; that stretch reads MWLFTVNQVL…ILLAKLCFQH (181 aa). Disordered stretches follow at residues 13–41 and 92–149; these read MQRR…ASVD and PASR…PGTP. Positions 107–121 are enriched in basic residues; the sequence is YHHRQPHHHFHHGGH. Over residues 131-140 the composition is skewed to basic and acidic residues; it reads GGDHRGHSEE. The chain crosses the membrane as a helical span at residues 182–202; that stretch reads KLGIAVCIGMASTFAYANSTL. Residues 203-214 lie on the Cytoplasmic side of the membrane; the sequence is REQVSLKEKRSV. The chain crosses the membrane as a helical span at residues 215 to 235; it reads LVILWILAFLAGNTLYVLYTF. Residues 236–255 lie on the Extracellular side of the membrane; it reads SSQQLYNSLIFLKPNLETLD. A helical membrane pass occupies residues 256-276; that stretch reads FFDLLWIVGIADFVLKYITIA. The Cytoplasmic portion of the chain corresponds to 277-329; the sequence is LKCLIVALPKIILAVKSKGKFYLVIEELSQLFRSLVPIQLWYKYIMGDDSSNS. The helical transmembrane segment at 330–350 threads the bilayer; the sequence is YFLGGVLIVLYSLCKSFDICG. Over 351–444 the chain is Extracellular; sequence RVGGVRKALK…GATSAHFQVY (94 aa). The RING-type; degenerate zinc finger occupies 384 to 422; it reads CAICQAEFREPLILLCQHVFCEECLCLWLDRERTCPLSR.

The protein resides in the membrane. Functionally, E3 ubiquitin-protein ligase that negatively regulates IL3-dependent cellular responses through IL3RA ubiquitination and degradation by the proteasome, having an anti-inflammatory effect. This Pongo abelii (Sumatran orangutan) protein is RING finger and transmembrane domain-containing protein 2 (RNFT2).